The primary structure comprises 128 residues: Probable soluble cytochrome b562 2 (128 aa).

Positions 1-22 (MGKTLMALITAALLSTSSLVMA) are cleaved as a signal peptide. Heme b contacts are provided by Met-29 and His-124.

The protein belongs to the cytochrome b562 family. Requires heme b as cofactor.

The protein resides in the periplasm. Functionally, electron-transport protein of unknown function. The protein is Probable soluble cytochrome b562 2 (cybC2) of Yersinia pestis.